The chain runs to 275 residues: Phosphatidylglycerol--prolipoprotein diacylglyceryl transferase (275 aa).

Transmembrane regions (helical) follow at residues 20-40 (FTIH…LLLA), 58-78 (LLWA…VFQW), 88-108 (IIAI…GFIV), and 118-138 (LSSW…QGIG). Arg139 serves as a coordination point for a 1,2-diacyl-sn-glycero-3-phospho-(1'-sn-glycerol). The next 2 helical transmembrane spans lie at 209 to 229 (GEIF…IEGM) and 239 to 259 (IRIS…ILII).

The protein belongs to the Lgt family.

It localises to the cell membrane. It catalyses the reaction L-cysteinyl-[prolipoprotein] + a 1,2-diacyl-sn-glycero-3-phospho-(1'-sn-glycerol) = an S-1,2-diacyl-sn-glyceryl-L-cysteinyl-[prolipoprotein] + sn-glycerol 1-phosphate + H(+). It functions in the pathway protein modification; lipoprotein biosynthesis (diacylglyceryl transfer). Functionally, catalyzes the transfer of the diacylglyceryl group from phosphatidylglycerol to the sulfhydryl group of the N-terminal cysteine of a prolipoprotein, the first step in the formation of mature lipoproteins. This chain is Phosphatidylglycerol--prolipoprotein diacylglyceryl transferase, found in Limosilactobacillus reuteri (strain DSM 20016) (Lactobacillus reuteri).